The chain runs to 193 residues: NADH-quinone oxidoreductase subunit B (193 aa).

Residues Cys-72, Cys-73, Cys-137, and Cys-167 each contribute to the [4Fe-4S] cluster site.

It belongs to the complex I 20 kDa subunit family. NDH-1 is composed of 14 different subunits. Subunits NuoB, C, D, E, F, and G constitute the peripheral sector of the complex. It depends on [4Fe-4S] cluster as a cofactor.

It is found in the cell inner membrane. It catalyses the reaction a quinone + NADH + 5 H(+)(in) = a quinol + NAD(+) + 4 H(+)(out). Functionally, NDH-1 shuttles electrons from NADH, via FMN and iron-sulfur (Fe-S) centers, to quinones in the respiratory chain. The immediate electron acceptor for the enzyme in this species is believed to be ubiquinone. Couples the redox reaction to proton translocation (for every two electrons transferred, four hydrogen ions are translocated across the cytoplasmic membrane), and thus conserves the redox energy in a proton gradient. The polypeptide is NADH-quinone oxidoreductase subunit B (Bartonella bacilliformis (strain ATCC 35685 / KC583 / Herrer 020/F12,63)).